A 516-amino-acid chain; its full sequence is 2,3-bisphosphoglycerate-independent phosphoglycerate mutase (516 aa).

Mn(2+) contacts are provided by Asp13 and Ser63. The active-site Phosphoserine intermediate is the Ser63. Substrate contacts are provided by residues His124, 154-155 (RD), Arg186, Arg192, 262-265 (RPDR), and Lys337. Mn(2+)-binding residues include Asp404, His408, Asp445, His446, and His464.

Belongs to the BPG-independent phosphoglycerate mutase family. In terms of assembly, monomer. Mn(2+) is required as a cofactor.

The enzyme catalyses (2R)-2-phosphoglycerate = (2R)-3-phosphoglycerate. Its pathway is carbohydrate degradation; glycolysis; pyruvate from D-glyceraldehyde 3-phosphate: step 3/5. Functionally, catalyzes the interconversion of 2-phosphoglycerate and 3-phosphoglycerate. The sequence is that of 2,3-bisphosphoglycerate-independent phosphoglycerate mutase from Cellvibrio japonicus (strain Ueda107) (Pseudomonas fluorescens subsp. cellulosa).